Here is a 144-residue protein sequence, read N- to C-terminus: Cysteine-rich tail protein 1 (144 aa).

The interval 51 to 105 (APEPTHLLQPTEVPGPKGAKGNQGAAPIQNQQAWQQPGNPYSSSQRQAGLTYAGP) is disordered. The segment covering 78–98 (IQNQQAWQQPGNPYSSSQRQA) has biased composition (polar residues).

Belongs to the CYSRT1 family. Interacts with LCE1B; the interaction is direct. Interacts with LCE2C; the interaction is direct. Interacts with LCE3A; the interaction is direct. Interacts with LCE3C; the interaction is direct. Interacts with LCE4A; the interaction is direct. Interacts with LCE5A; the interaction is direct. Interacts with LCE1C. Interacts with LCE1D. Interacts with LCE1E. Interacts with LCE2A. Interacts with LCE3D. Interacts with LCE3E. Interacts with LCE1A. As to expression, expressed in the stratum granulosum, in skin and oral epithelia (at protein level).

The protein resides in the cornified envelope. Component of the stratum corneum that may contribute to epidermal antimicrobial host defenses. The polypeptide is Cysteine-rich tail protein 1 (CYSRT1) (Homo sapiens (Human)).